The following is a 183-amino-acid chain: MNLRIGEGWDVHALVPGRRLVIGGVELEHPMGLGLLGHSDADVLLHAITDALLGAAALGDIGRHFPDTDAAFRAADSRLLLAEAARRVRAAGYEIGNIDSTVVAQAPRLAAHIPAMRLAIARALGVDQGQVNVKAKTAEGLGPVGQNLAIEARAVALICATPGAGAIGPAAQRVSSAWSGSGA.

Residues Asp10 and His12 each contribute to the a divalent metal cation site. 4-CDP-2-C-methyl-D-erythritol 2-phosphate-binding positions include 10–12 and 38–39; these read DVH and HS. A divalent metal cation is bound at residue His46. Residues 60 to 62 and 65 to 69 each bind 4-CDP-2-C-methyl-D-erythritol 2-phosphate; these read DIG and FPDTD.

The protein belongs to the IspF family. As to quaternary structure, homotrimer. Requires a divalent metal cation as cofactor.

The enzyme catalyses 4-CDP-2-C-methyl-D-erythritol 2-phosphate = 2-C-methyl-D-erythritol 2,4-cyclic diphosphate + CMP. It functions in the pathway isoprenoid biosynthesis; isopentenyl diphosphate biosynthesis via DXP pathway; isopentenyl diphosphate from 1-deoxy-D-xylulose 5-phosphate: step 4/6. Involved in the biosynthesis of isopentenyl diphosphate (IPP) and dimethylallyl diphosphate (DMAPP), two major building blocks of isoprenoid compounds. Catalyzes the conversion of 4-diphosphocytidyl-2-C-methyl-D-erythritol 2-phosphate (CDP-ME2P) to 2-C-methyl-D-erythritol 2,4-cyclodiphosphate (ME-CPP) with a corresponding release of cytidine 5-monophosphate (CMP). In Verminephrobacter eiseniae (strain EF01-2), this protein is 2-C-methyl-D-erythritol 2,4-cyclodiphosphate synthase.